Reading from the N-terminus, the 594-residue chain is Aspartate--tRNA(Asp/Asn) ligase (594 aa).

Glutamate 175 contributes to the L-aspartate binding site. Positions 199–202 (QIYK) are aspartate. Residues arginine 221 and histidine 454 each coordinate L-aspartate. Residue 221–223 (RDE) coordinates ATP. Glutamate 488 lines the ATP pocket. L-aspartate is bound at residue arginine 495. ATP is bound at residue 540–543 (GIDR).

It belongs to the class-II aminoacyl-tRNA synthetase family. Type 1 subfamily. In terms of assembly, homodimer.

The protein resides in the cytoplasm. The catalysed reaction is tRNA(Asx) + L-aspartate + ATP = L-aspartyl-tRNA(Asx) + AMP + diphosphate. Functionally, aspartyl-tRNA synthetase with relaxed tRNA specificity since it is able to aspartylate not only its cognate tRNA(Asp) but also tRNA(Asn). Reaction proceeds in two steps: L-aspartate is first activated by ATP to form Asp-AMP and then transferred to the acceptor end of tRNA(Asp/Asn). In Chelativorans sp. (strain BNC1), this protein is Aspartate--tRNA(Asp/Asn) ligase.